A 233-amino-acid polypeptide reads, in one-letter code: Lipid A 4'-phosphatase (233 aa).

Position 1 (Met-1) is a topological domain, cytoplasmic. Residues 2-22 (LLFWMWWALLAVFRAFPGIDI) form a helical membrane-spanning segment. Residues 23 to 60 (YFSQLFFVGADCDATAAAGNICGGFPYRDVAAFDLLRT) lie on the Extracellular side of the membrane. Residues 61 to 81 (VFFRLPYVVAIVMVWKLVECY) form a helical membrane-spanning segment. Residues 82–94 (QQHGATFNAERAQ) are Cytoplasmic-facing. Residues 95–115 (KLKVALGTLLIGPVLLVNVVL) traverse the membrane as a helical segment. Over 116 to 149 (KEHWGRPRPIQTDIFGGALHFAEAGSLAGKCVSN) the chain is Extracellular. The helical transmembrane segment at 150–170 (CSFVSGEAASAGWLFCLLLFV) threads the bilayer. Over 171–176 (PKSLRY) the chain is Cytoplasmic. A helical membrane pass occupies residues 177–197 (AVAAPLAAISILTPAMRLSFG). Over 198–200 (AHY) the chain is Extracellular. A helical transmembrane segment spans residues 201 to 221 (LSDVVLGWLSSLVVFAALLAL). Topologically, residues 222 to 233 (TESQQHQKNSEI) are cytoplasmic.

The protein belongs to the lipid A LpxF 4'-phosphatase family.

It is found in the cell inner membrane. Its pathway is bacterial outer membrane biogenesis; LPS lipid A biosynthesis. Its function is as follows. Removes the 4'-phosphate moiety from lipid IV(A) (a tetraacylated precursor of lipid A). This Rhizobium leguminosarum protein is Lipid A 4'-phosphatase.